Here is a 156-residue protein sequence, read N- to C-terminus: Transcription antitermination protein NusB (156 aa).

It belongs to the NusB family.

Functionally, involved in transcription antitermination. Required for transcription of ribosomal RNA (rRNA) genes. Binds specifically to the boxA antiterminator sequence of the ribosomal RNA (rrn) operons. The chain is Transcription antitermination protein NusB from Clostridium kluyveri (strain ATCC 8527 / DSM 555 / NBRC 12016 / NCIMB 10680 / K1).